The sequence spans 86 residues: MANHKSALKRARQNEERRIRNRARKTRMKNVIRSLEEAIASNSRETALERLKMAVSVIDTTASRGVIHKNTASRKVARLSKRVNAL.

The span at 1–11 (MANHKSALKRA) shows a compositional bias: basic residues. Residues 1–27 (MANHKSALKRARQNEERRIRNRARKTR) form a disordered region.

It belongs to the bacterial ribosomal protein bS20 family.

Binds directly to 16S ribosomal RNA. This Syntrophobacter fumaroxidans (strain DSM 10017 / MPOB) protein is Small ribosomal subunit protein bS20.